We begin with the raw amino-acid sequence, 536 residues long: Plasmepsin V (536 aa).

An N-terminal signal peptide occupies residues 1–34; the sequence is MVGASLGPPGRGSLSRLIRLVICVLTLCALSVQG. Residues 35–492 are Lumenal-facing; the sequence is RSESTEGHSK…RKDNIFLKIP (458 aa). A Peptidase A1 domain is found at 62-462; that stretch reads YFLDIDIGTP…DIQKNRIGFV (401 aa). The active site involves Asp-80. Disulfide bonds link Cys-90/Cys-172, Cys-93/Cys-96, Cys-117/Cys-128, Cys-122/Cys-133, Cys-220/Cys-466, Cys-337/Cys-382, and Cys-391/Cys-427. Positions 244–258 are enriched in low complexity; the sequence is SKSVSGQGSGPVSES. The interval 244 to 264 is disordered; that stretch reads SKSVSGQGSGPVSESLSESGE. The active site involves Asp-313. Residues 493–513 form a helical membrane-spanning segment; that stretch reads FFYLYSLFVVFALSVLLSLVF. The Cytoplasmic segment spans residues 514–536; sequence YVRRLYHMEYSPLPSEGKAPADA.

The protein belongs to the peptidase A1 family. Component of a complex composed of SPC25 and PMV; the interaction is mediated via the transmembrane domains. The complex interacts with the SEC61 channel-forming translocon complex and is involved in the recognition and import of PEXEL motif-containing proteins into the ER for subsequent export. In terms of processing, it is not clear if the zymogen has a cleavable propeptide. Cleavage of the putative propeptide is dispensable for catalytic activity.

It localises to the endoplasmic reticulum membrane. Its activity is regulated as follows. Inhibited by peptidomimetic inhibitors such as WEHI-842. During the asexual blood stage, plays an essential role in the export of several proteins into the host erythrocytes by cleaving the pentameric localization motif RxLxE/Q/D (termed Plasmodium export element (PEXEL)) located downstream of the N-terminal secretory signal sequence. Specifically, cleaves after the leucine residue in the RxLxE/Q/D (or RxLxxE) motif of exported proteins including EMP1. Also, by regulating protein export, plays an essential role in gametocyte development and thus parasite transmission to the mosquito vector. This Plasmodium vivax (strain Salvador I) protein is Plasmepsin V.